We begin with the raw amino-acid sequence, 83 residues long: Toxin To12 (83 aa).

A signal peptide spans 1 to 19; it reads MKGLILFICGFMMIGVILA. The region spanning 20–82 is the LCN-type CS-alpha/beta domain; it reads KEGYPMDHEG…VWDYYNNKCG (63 aa). 4 disulfide bridges follow: cysteine 30/cysteine 81, cysteine 34/cysteine 57, cysteine 42/cysteine 62, and cysteine 46/cysteine 64. Cysteine 81 bears the Cysteine amide mark.

This sequence belongs to the long (4 C-C) scorpion toxin superfamily. Sodium channel inhibitor family. Beta subfamily. Expressed by the venom gland.

Its subcellular location is the secreted. Beta toxins bind voltage-independently at site-4 of sodium channels (Nav) and shift the voltage of activation toward more negative potentials thereby affecting sodium channel activation and promoting spontaneous and repetitive firing. The chain is Toxin To12 from Tityus obscurus (Amazonian scorpion).